A 278-amino-acid chain; its full sequence is Large ribosomal subunit protein uL2 (278 aa).

Disordered regions lie at residues 28-58 (TPEKSLTRPLPKKGGRNNQGRITTRHQGGGH) and 223-278 (GVVM…KNKR). A compositionally biased stretch (polar residues) spans 43–53 (RNNQGRITTRH). Residues 268-278 (IRRRKTGKNKR) are compositionally biased toward basic residues.

This sequence belongs to the universal ribosomal protein uL2 family. In terms of assembly, part of the 50S ribosomal subunit. Forms a bridge to the 30S subunit in the 70S ribosome.

In terms of biological role, one of the primary rRNA binding proteins. Required for association of the 30S and 50S subunits to form the 70S ribosome, for tRNA binding and peptide bond formation. It has been suggested to have peptidyltransferase activity; this is somewhat controversial. Makes several contacts with the 16S rRNA in the 70S ribosome. In Nocardioides sp. (strain ATCC BAA-499 / JS614), this protein is Large ribosomal subunit protein uL2.